Consider the following 458-residue polypeptide: Methylenetetrahydrofolate--tRNA-(uracil-5-)-methyltransferase TrmFO (458 aa).

Residue 11–16 (GGGMAG) coordinates FAD.

The protein belongs to the MnmG family. TrmFO subfamily. It depends on FAD as a cofactor.

The protein localises to the cytoplasm. It carries out the reaction uridine(54) in tRNA + (6R)-5,10-methylene-5,6,7,8-tetrahydrofolate + NADH + H(+) = 5-methyluridine(54) in tRNA + (6S)-5,6,7,8-tetrahydrofolate + NAD(+). The enzyme catalyses uridine(54) in tRNA + (6R)-5,10-methylene-5,6,7,8-tetrahydrofolate + NADPH + H(+) = 5-methyluridine(54) in tRNA + (6S)-5,6,7,8-tetrahydrofolate + NADP(+). Functionally, catalyzes the folate-dependent formation of 5-methyl-uridine at position 54 (M-5-U54) in all tRNAs. The polypeptide is Methylenetetrahydrofolate--tRNA-(uracil-5-)-methyltransferase TrmFO (Jannaschia sp. (strain CCS1)).